The following is a 423-amino-acid chain: TNF receptor-associated factor family protein DDB_G0277243 (423 aa).

The segment at 20–66 (CSICVDPVLNSLPLEQHQALSCKNGHLLCQACWGKQLALRKECCICK) adopts an RING-type; degenerate zinc-finger fold. 2 TRAF-type zinc fingers span residues 124–179 (SHLR…NDMP) and 180–237 (THIE…CYLS). The MATH domain maps to 287 to 411 (RYKGNWTIEN…DGKLTINIDV (125 aa)).

Belongs to the TNF receptor-associated factor family. A subfamily.

Its subcellular location is the cytoplasm. Functionally, probable adapter protein and signal transducer that links members of the tumor necrosis factor receptor family to different signaling pathways by association with the receptor cytoplasmic domain and kinases. The sequence is that of TNF receptor-associated factor family protein DDB_G0277243 from Dictyostelium discoideum (Social amoeba).